The sequence spans 106 residues: UPF0145 protein BDI_2732 (106 aa).

This sequence belongs to the UPF0145 family.

The chain is UPF0145 protein BDI_2732 from Parabacteroides distasonis (strain ATCC 8503 / DSM 20701 / CIP 104284 / JCM 5825 / NCTC 11152).